Here is a 431-residue protein sequence, read N- to C-terminus: Histidinol dehydrogenase (431 aa).

The NAD(+) site is built by Y130, Q191, and N214. Substrate-binding residues include S237, Q259, and H262. Residues Q259 and H262 each coordinate Zn(2+). Catalysis depends on proton acceptor residues E327 and H328. 4 residues coordinate substrate: H328, D361, E415, and H420. D361 is a binding site for Zn(2+). H420 is a binding site for Zn(2+).

This sequence belongs to the histidinol dehydrogenase family. Zn(2+) serves as cofactor.

The enzyme catalyses L-histidinol + 2 NAD(+) + H2O = L-histidine + 2 NADH + 3 H(+). It participates in amino-acid biosynthesis; L-histidine biosynthesis; L-histidine from 5-phospho-alpha-D-ribose 1-diphosphate: step 9/9. Functionally, catalyzes the sequential NAD-dependent oxidations of L-histidinol to L-histidinaldehyde and then to L-histidine. The chain is Histidinol dehydrogenase from Rhodopseudomonas palustris (strain ATCC BAA-98 / CGA009).